Reading from the N-terminus, the 166-residue chain is NAD(P)H-quinone oxidoreductase subunit I, chloroplastic (166 aa).

2 4Fe-4S ferredoxin-type domains span residues 55–84 (GRIH…VDWK) and 95–124 (LNYS…MTEE). Residues Cys64, Cys67, Cys70, Cys74, Cys104, Cys107, Cys110, and Cys114 each coordinate [4Fe-4S] cluster.

This sequence belongs to the complex I 23 kDa subunit family. As to quaternary structure, NDH is composed of at least 16 different subunits, 5 of which are encoded in the nucleus. Requires [4Fe-4S] cluster as cofactor.

It is found in the plastid. The protein resides in the chloroplast thylakoid membrane. It carries out the reaction a plastoquinone + NADH + (n+1) H(+)(in) = a plastoquinol + NAD(+) + n H(+)(out). The enzyme catalyses a plastoquinone + NADPH + (n+1) H(+)(in) = a plastoquinol + NADP(+) + n H(+)(out). In terms of biological role, NDH shuttles electrons from NAD(P)H:plastoquinone, via FMN and iron-sulfur (Fe-S) centers, to quinones in the photosynthetic chain and possibly in a chloroplast respiratory chain. The immediate electron acceptor for the enzyme in this species is believed to be plastoquinone. Couples the redox reaction to proton translocation, and thus conserves the redox energy in a proton gradient. This Stevia rebaudiana (Stevia) protein is NAD(P)H-quinone oxidoreductase subunit I, chloroplastic.